We begin with the raw amino-acid sequence, 376 residues long: Chaperone protein DnaJ (376 aa).

In terms of domain architecture, J spans 5 to 70 (DYYEILGVSK…QKRAAYDQYG (66 aa)). Residues 131 to 209 (GVTKEIRIPT…CHGHGRVERS (79 aa)) form a CR-type zinc finger. Residues Cys-144, Cys-147, Cys-161, Cys-164, Cys-183, Cys-186, Cys-197, and Cys-200 each coordinate Zn(2+). CXXCXGXG motif repeat units follow at residues 144 to 151 (CDVCHGSG), 161 to 168 (CPTCHGSG), 183 to 190 (CPHCQGRG), and 197 to 204 (CNKCHGHG).

Belongs to the DnaJ family. As to quaternary structure, homodimer. Zn(2+) serves as cofactor.

It is found in the cytoplasm. Participates actively in the response to hyperosmotic and heat shock by preventing the aggregation of stress-denatured proteins and by disaggregating proteins, also in an autonomous, DnaK-independent fashion. Unfolded proteins bind initially to DnaJ; upon interaction with the DnaJ-bound protein, DnaK hydrolyzes its bound ATP, resulting in the formation of a stable complex. GrpE releases ADP from DnaK; ATP binding to DnaK triggers the release of the substrate protein, thus completing the reaction cycle. Several rounds of ATP-dependent interactions between DnaJ, DnaK and GrpE are required for fully efficient folding. Also involved, together with DnaK and GrpE, in the DNA replication of plasmids through activation of initiation proteins. The sequence is that of Chaperone protein DnaJ from Shigella flexneri.